Here is a 581-residue protein sequence, read N- to C-terminus: MAARSWQDELAQQAEEGSARLRELLSVGLGFLRTELGLDLGLEPKRYPSWVILVGTGALGLLLLFLLGYGWAAACAGARKKRRSPPRKREEVTPPTPAPEDPAQLKNLRSEEQKKKNRKKLPEKPKPNGRTVEIPEDEVVRTPRSITAKQPPETDKKNEKSKKNKKKSKSDAKAVQNSSRHDGKEVDEGAWETKISHREKRQQRKRDKVLTDSGSLDSTIPGIENTITVTTEQLTTASFPVGSKKNKGDSHLNVQVSNFKSGKGDSTLQVSSGLNENITVNGGGWSEKSVKLSSQLSAGEEKWNSVPPASAGKRKTEQSAWTQDPGDTNANGKDWGRNWSDRSIFSGIGSTAEPVSQSTTSDYQWDGSRNQPHIDDEWSGLNGLSSADPSSDWNAPAEEWGNWVDEDRASLLKSQEPISNDQKDSDDDKEKGEGALPTGKSKKKKKKKKKQGEDNSITQDTEDLEKDTREELPVNTSKARPKQEKACSLKTMSTSDPVEVLIKNSQPIKTLPPAISAEPSVTLSKGDSDKSSSQVPPMLQDTDKPKSNAKQNSVPPSQTKSETNWESPKQIKKKKKARRET.

The Lumenal segment spans residues 1-49; the sequence is MAARSWQDELAQQAEEGSARLRELLSVGLGFLRTELGLDLGLEPKRYPS. The activation of NF-kappa-B stretch occupies residues 1 to 71; it reads MAARSWQDEL…LLLFLLGYGW (71 aa). The helical transmembrane segment at 50-70 threads the bilayer; sequence WVILVGTGALGLLLLFLLGYG. Residues 71–581 lie on the Cytoplasmic side of the membrane; the sequence is WAAACAGARK…KKKKKARRET (511 aa). The interaction with BCCIP stretch occupies residues 72–168; that stretch reads AAACAGARKK…EKSKKNKKKS (97 aa). The disordered stretch occupies residues 77 to 221; the sequence is GARKKRRSPP…DSGSLDSTIP (145 aa). Positions 100–204 are interaction with RELA; that stretch reads EDPAQLKNLR…ISHREKRQQR (105 aa). Residues 108-126 are compositionally biased toward basic and acidic residues; sequence LRSEEQKKKNRKKLPEKPK. Phosphothreonine is present on Thr-142. Basic residues predominate over residues 159–168; the sequence is EKSKKNKKKS. Ser-179 is modified (phosphoserine). A compositionally biased stretch (basic residues) spans 197–207; sequence HREKRQQRKRD. Phosphoserine occurs at positions 215 and 250. Lys-263 carries the N6-acetyllysine modification. The segment at 280–581 is disordered; that stretch reads VNGGGWSEKS…KKKKKARRET (302 aa). Residues Ser-297, Ser-305, and Ser-310 each carry the phosphoserine modification. Residues 318-331 are compositionally biased toward polar residues; that stretch reads QSAWTQDPGDTNAN. Residues Ser-343 and Ser-368 each carry the phosphoserine modification. 2 stretches are compositionally biased toward polar residues: residues 353 to 371 and 382 to 393; these read EPVS…SRNQ and NGLSSADPSSDW. The interval 380–442 is lung-homing for mammary tumors; sequence GLNGLSSADP…EGALPTGKSK (63 aa). Ser-414 and Ser-425 each carry phosphoserine. A compositionally biased stretch (basic and acidic residues) spans 421-433; sequence DQKDSDDDKEKGE. Residues 440–450 show a composition bias toward basic residues; it reads KSKKKKKKKKK. Phosphoserine is present on residues Ser-456, Ser-477, Ser-493, and Ser-495. 2 stretches are compositionally biased toward polar residues: residues 519-535 and 548-567; these read PSVT…SSQV and NAKQ…NWES. Ser-567 is modified (phosphoserine). Residues 570-581 show a composition bias toward basic residues; sequence QIKKKKKARRET.

Interacts with BCCIP, CREBBP/CBP and RELA/p65. As to expression, widely expressed, with highest levels in liver, kidney, prostate and small intestine. Not detected in endothelial cells.

The protein resides in the endoplasmic reticulum membrane. Its subcellular location is the nucleus membrane. It is found in the cell junction. It localises to the tight junction. The protein localises to the nucleus. The protein resides in the nucleolus. Its subcellular location is the cytoplasm. It is found in the perinuclear region. Down-regulates SLC1A2/EAAT2 promoter activity when expressed ectopically. Activates the nuclear factor kappa-B (NF-kappa-B) transcription factor. Promotes anchorage-independent growth of immortalized melanocytes and astrocytes which is a key component in tumor cell expansion. Promotes lung metastasis and also has an effect on bone and brain metastasis, possibly by enhancing the seeding of tumor cells to the target organ endothelium. Induces chemoresistance. The sequence is that of Protein LYRIC (Mtdh) from Rattus norvegicus (Rat).